The sequence spans 213 residues: Uridine kinase (213 aa).

An ATP-binding site is contributed by 15–22 (GASASGKS).

It belongs to the uridine kinase family.

The protein localises to the cytoplasm. It carries out the reaction uridine + ATP = UMP + ADP + H(+). The enzyme catalyses cytidine + ATP = CMP + ADP + H(+). The protein operates within pyrimidine metabolism; CTP biosynthesis via salvage pathway; CTP from cytidine: step 1/3. It functions in the pathway pyrimidine metabolism; UMP biosynthesis via salvage pathway; UMP from uridine: step 1/1. This Escherichia coli O157:H7 protein is Uridine kinase.